Consider the following 544-residue polypeptide: Phosphoacetylglucosamine mutase (544 aa).

Serine 66 serves as the catalytic Phosphoserine intermediate. 4 residues coordinate Mg(2+): serine 66, aspartate 290, aspartate 292, and aspartate 294. Residues 387 to 389, 512 to 516, and arginine 521 each bind substrate; these read EAN and RASGT.

This sequence belongs to the phosphohexose mutase family. Mg(2+) is required as a cofactor.

The enzyme catalyses N-acetyl-alpha-D-glucosamine 1-phosphate = N-acetyl-D-glucosamine 6-phosphate. It functions in the pathway nucleotide-sugar biosynthesis; UDP-N-acetyl-alpha-D-glucosamine biosynthesis; N-acetyl-alpha-D-glucosamine 1-phosphate from alpha-D-glucosamine 6-phosphate (route I): step 2/2. Functionally, catalyzes the conversion of GlcNAc-6-P into GlcNAc-1-P during the synthesis of uridine diphosphate/UDP-GlcNAc, which is a biosynthetic precursor of chitin and also supplies the amino sugars for N-linked oligosaccharides of glycoproteins. This Candida albicans (Yeast) protein is Phosphoacetylglucosamine mutase.